Consider the following 423-residue polypeptide: MQLLNLGLLLLLPFVAGEIAPQPEPLRAGPSDIVPGQYIVTLKEGLASAQIREHKKWVSSVHQANLDSFAAGASGVETVGIMKNFHIHNLNMYSGGFDDKTAEDLRRSPDVKSVHPDQHVYLAKTVTQPQARWGLGYMSSKGKPVPLHSTLVDYLYDDKAGEGVWAYVLDTGINVDHIEFEGRGILGHNAIPNKPHTDEFGHGTYVAGIIAGKTYGVAKKANVVSAKAFDTGSSTYNYILETYDWIVKNITDSNRKNKAVINLSISGAKYQPFDDAVENAFKAGITTVVAAGNDGKDAKNNTPASSPNAITVGAVRWENTRPSFSNYGKIVDIWAPGELIKSCWKGGNNATSTQSGTSAASPHVAGLVAYLMSLENLPSPSAVTARVLNLTIPNLVKDAKDSPNRVVYNGIQERKFTLPKNTK.

The first 17 residues, Met-1–Gly-17, serve as a signal peptide directing secretion. A propeptide spanning residues Glu-18–Ala-123 is cleaved from the precursor. In terms of domain architecture, Inhibitor I9 spans Gln-37–Ala-123. One can recognise a Peptidase S8 domain in the interval Arg-132–Lys-423. Catalysis depends on charge relay system residues Asp-170 and His-202. N-linked (GlcNAc...) asparagine glycosylation is found at Asn-249, Asn-262, and Asn-349. Ser-358 acts as the Charge relay system in catalysis. The N-linked (GlcNAc...) asparagine glycan is linked to Asn-389.

This sequence belongs to the peptidase S8 family.

The protein localises to the secreted. Functionally, secreted subtilisin-like serine protease with keratinolytic activity that contributes to pathogenicity. The chain is Subtilisin-like protease 2 (SUB2) from Arthroderma otae (strain ATCC MYA-4605 / CBS 113480) (Microsporum canis).